A 231-amino-acid chain; its full sequence is uncharacterized protein (231 aa).

A helical membrane pass occupies residues 86–106 (LIILFVIGLIITIIGLLMYEP).

The protein localises to the membrane. This is an uncharacterized protein from Methanocaldococcus jannaschii (strain ATCC 43067 / DSM 2661 / JAL-1 / JCM 10045 / NBRC 100440) (Methanococcus jannaschii).